Consider the following 481-residue polypeptide: Neuronal acetylcholine receptor subunit eat-2 (481 aa).

An N-terminal signal peptide occupies residues 1–19 (MFLLLQILYILLFLNLADT). The Extracellular portion of the chain corresponds to 20-235 (SDDEYRLLKD…MHLKRRTMYY (216 aa)). An N-linked (GlcNAc...) asparagine glycan is attached at Asn-93. Cys-147 and Cys-161 form a disulfide bridge. A run of 3 helical transmembrane segments spans residues 236–256 (GLNWIIPSILISLSNILGFTM), 264–284 (VTLQITNFLSIMVFLAMVSEV), and 292–312 (IPIIAAFFSFAIVILGVSICV). Over 313–443 (SLITVNIFYR…WRFMAMVIDR (131 aa)) the chain is Cytoplasmic. Residues 356–384 (KPKREKKKEEEEDEESNAGGKEEESELIS) form a disordered region. Residues 444–464 (ASLFLFTGLIFGTTFVIFAAC) form a helical membrane-spanning segment.

This sequence belongs to the ligand-gated ion channel (TC 1.A.9) family. Acetylcholine receptor (TC 1.A.9.1) subfamily. Neuronal AChR seems to be composed of two different type of subunits: alpha and beta.

Its subcellular location is the postsynaptic cell membrane. It localises to the cell membrane. In terms of biological role, after binding acetylcholine, the AChR responds by an extensive change in conformation that affects all subunits and leads to opening of an ion-conducting channel across the plasma membrane. Nicotinic acetylcholine receptor in the MC pharyngeal motor neuron involved in pharyngeal pumping. Has a role in the determination of life span possibly via calorific restriction which affects growth rate, although this is independent of metabolic activity. In Caenorhabditis briggsae, this protein is Neuronal acetylcholine receptor subunit eat-2.